Reading from the N-terminus, the 480-residue chain is MEVFFLSLLLICVLSVSIRLYLLLYKHRSHFTGPNLPPGKIGWPMVGESLEFLSTGWKGHPEKFIFDRISKYSSEVFKTSLLGEPAAVFAGAAGNKFLFSNENKLVHAWWPSSVDKVFPSSTQTSSKEEAKKMRKLLPQFLKPEALQRYTGIMDHIAQRHFADSWDNRDEVIVFPLAKRFTFWLACRLFMSIEDPAHVAKFEKPFHVLASGLITIPIDLPGTPFHRAIKASNFIRKELRAIIKQRKIDLAESKASKTQDILSHMLLATDEDGCHMNEMSIADKILGLLIGGHDTASSAITFLVKYMAELPHIYEKVYKEQMEIANSKAPGELLNWDDVQKMRYSWNVACEVMRLAPPLQGAFREAITDFVFNGFSIPKGWKLYWSANSTHKSLECFPQPEKFDPTRFEGAGPAPYTFVPFGGGPRMCPGKEYARLEILIFMHNLVKRFKWDKLLPDEKIIVDPMPMPAKGLPVRLHPHKP.

A helical transmembrane segment spans residues 3–23 (VFFLSLLLICVLSVSIRLYLL). Cys-427 lines the heme pocket.

This sequence belongs to the cytochrome P450 family. Heme serves as cofactor. Expressed in leaves, stems and fruit skin.

The protein resides in the membrane. The catalysed reaction is beta-amyrin + 3 reduced [NADPH--hemoprotein reductase] + 3 O2 = oleanolate + 3 oxidized [NADPH--hemoprotein reductase] + 4 H2O + 4 H(+). Its function is as follows. Catalyzes the carboxylation of beta-amyrin at the C-28 position to form oleanolic acid. May be involved in saponin biosynthesis in fruit skin. The sequence is that of Beta-amyrin 28-monooxygenase from Vitis vinifera (Grape).